Consider the following 314-residue polypeptide: Putative S-adenosyl-L-methionine-dependent methyltransferase MMAR_5323 (314 aa).

S-adenosyl-L-methionine contacts are provided by residues aspartate 132 and 161-162 (DL).

Belongs to the UPF0677 family.

In terms of biological role, exhibits S-adenosyl-L-methionine-dependent methyltransferase activity. The sequence is that of Putative S-adenosyl-L-methionine-dependent methyltransferase MMAR_5323 from Mycobacterium marinum (strain ATCC BAA-535 / M).